The sequence spans 423 residues: Glucose-1-phosphate adenylyltransferase (423 aa).

Alpha-D-glucose 1-phosphate contacts are provided by residues Y108, G173, 188–189 (EK), and S207.

It belongs to the bacterial/plant glucose-1-phosphate adenylyltransferase family. Homotetramer.

It carries out the reaction alpha-D-glucose 1-phosphate + ATP + H(+) = ADP-alpha-D-glucose + diphosphate. The protein operates within glycan biosynthesis; glycogen biosynthesis. Involved in the biosynthesis of ADP-glucose, a building block required for the elongation reactions to produce glycogen. Catalyzes the reaction between ATP and alpha-D-glucose 1-phosphate (G1P) to produce pyrophosphate and ADP-Glc. The chain is Glucose-1-phosphate adenylyltransferase from Francisella tularensis subsp. tularensis (strain WY96-3418).